The following is a 428-amino-acid chain: Light-independent protochlorophyllide reductase subunit N (428 aa).

[4Fe-4S] cluster is bound by residues Cys-31, Cys-56, and Cys-117.

The protein belongs to the BchN/ChlN family. As to quaternary structure, protochlorophyllide reductase is composed of three subunits; BchL, BchN and BchB. Forms a heterotetramer of two BchB and two BchN subunits. [4Fe-4S] cluster serves as cofactor.

It catalyses the reaction chlorophyllide a + oxidized 2[4Fe-4S]-[ferredoxin] + 2 ADP + 2 phosphate = protochlorophyllide a + reduced 2[4Fe-4S]-[ferredoxin] + 2 ATP + 2 H2O. It participates in porphyrin-containing compound metabolism; bacteriochlorophyll biosynthesis (light-independent). In terms of biological role, component of the dark-operative protochlorophyllide reductase (DPOR) that uses Mg-ATP and reduced ferredoxin to reduce ring D of protochlorophyllide (Pchlide) to form chlorophyllide a (Chlide). This reaction is light-independent. The NB-protein (BchN-BchB) is the catalytic component of the complex. The polypeptide is Light-independent protochlorophyllide reductase subunit N (Rhodopseudomonas palustris (strain BisB18)).